A 552-amino-acid chain; its full sequence is Probable protein kinase UbiB (552 aa).

One can recognise a Protein kinase domain in the interval 121-504; it reads HFDTVPLASA…QGLQRRVVNA (384 aa). ATP-binding positions include 127–135 and K149; that span reads LASASISQV. The active-site Proton acceptor is the D284. Helical transmembrane passes span 501–521 and 530–550; these read VVNA…YGLH and IPVW…SAWW.

Belongs to the ABC1 family. UbiB subfamily.

The protein localises to the cell inner membrane. It participates in cofactor biosynthesis; ubiquinone biosynthesis [regulation]. In terms of biological role, is probably a protein kinase regulator of UbiI activity which is involved in aerobic coenzyme Q (ubiquinone) biosynthesis. The chain is Probable protein kinase UbiB from Xylella fastidiosa (strain M23).